Here is a 401-residue protein sequence, read N- to C-terminus: CCA-adding enzyme (401 aa).

The ATP site is built by Gly-32 and Arg-35. CTP contacts are provided by Gly-32 and Arg-35. Residues Asp-45 and Asp-47 each coordinate Mg(2+). ATP contacts are provided by Arg-116, Asp-159, Arg-162, Arg-165, and Arg-168. The CTP site is built by Arg-116, Asp-159, Arg-162, Arg-165, and Arg-168.

This sequence belongs to the tRNA nucleotidyltransferase/poly(A) polymerase family. Bacterial CCA-adding enzyme type 3 subfamily. As to quaternary structure, homodimer. Mg(2+) is required as a cofactor.

It catalyses the reaction a tRNA precursor + 2 CTP + ATP = a tRNA with a 3' CCA end + 3 diphosphate. It carries out the reaction a tRNA with a 3' CCA end + 2 CTP + ATP = a tRNA with a 3' CCACCA end + 3 diphosphate. Functionally, catalyzes the addition and repair of the essential 3'-terminal CCA sequence in tRNAs without using a nucleic acid template. Adds these three nucleotides in the order of C, C, and A to the tRNA nucleotide-73, using CTP and ATP as substrates and producing inorganic pyrophosphate. tRNA 3'-terminal CCA addition is required both for tRNA processing and repair. Also involved in tRNA surveillance by mediating tandem CCA addition to generate a CCACCA at the 3' terminus of unstable tRNAs. While stable tRNAs receive only 3'-terminal CCA, unstable tRNAs are marked with CCACCA and rapidly degraded. The chain is CCA-adding enzyme from Streptococcus mutans serotype c (strain ATCC 700610 / UA159).